The chain runs to 374 residues: Ferroptosis suppressor protein 1 (374 aa).

Glycine 2 carries the N-myristoyl glycine lipid modification. The chain crosses the membrane as a helical span at residues 13-35; the sequence is VVIVGGGFAGIAAASQLKSFGIP. 6-hydroxy-FAD contacts are provided by residues 17–21, arginine 53, and valine 81; that span reads GGGFA. Lysine 167 bears the N6-acetyllysine mark. Aspartate 285 is a 6-hydroxy-FAD binding site.

It belongs to the FAD-dependent oxidoreductase family. The cofactor is 6-hydroxy-FAD. Post-translationally, N-myristoylation at Gly-2 mediates the recruitment to lipid droplets and plasma membrane. Acetylation at Lys-167 prevents AIFM2 ubiquitination and degradation, thereby inhibiting ferroptosis. KAT2B mediates acetylation at Lys-167, while HDAC3 removes it. In terms of processing, ubiquitinated. AIFM2 undergoes 'Lys-29'-ubiquitination and proteasomal degradation, which is inhibited by acetylation at Lys-167.

The protein localises to the lipid droplet. It is found in the cell membrane. Its subcellular location is the cytoplasm. It localises to the mitochondrion membrane. The protein resides in the nucleus. The enzyme catalyses ubiquinone-10 + NADH + H(+) = ubiquinol-10 + NAD(+). It catalyses the reaction phylloquinone + NADH + H(+) = phylloquinol + NAD(+). The catalysed reaction is menaquinone-4 + NADH + H(+) = menaquinol-4 + NAD(+). It carries out the reaction menadione + NADH + H(+) = menadiol + NAD(+). Its activity is regulated as follows. The modification by 4-hydroxy-2-nonenal (HNE) adduction in mitochondria results in loss of the oxidoreductase activity and activation of a novel function in mitochondrial oxidative stress signaling. Its function is as follows. An NAD(P)H-dependent oxidoreductase that acts as a key inhibitor of ferroptosis. At the plasma membrane, catalyzes reduction of coenzyme Q/ubiquinone-10 to ubiquinol-10, a lipophilic radical-trapping antioxidant that prevents lipid oxidative damage and consequently ferroptosis. Acts in parallel to GPX4 to suppress phospholipid peroxidation and ferroptosis. This anti-ferroptotic function is independent of cellular glutathione levels. Also acts as a potent radical-trapping antioxidant by mediating warfarin-resistant vitamin K reduction in the canonical vitamin K cycle: catalyzes NAD(P)H-dependent reduction of vitamin K (phylloquinone, menaquinone-4 and menadione) to hydroquinone forms. Hydroquinones act as potent radical-trapping antioxidants inhibitor of phospholipid peroxidation and ferroptosis. May play a role in mitochondrial stress signaling. Upon oxidative stress, associates with the lipid peroxidation end product 4-hydroxy-2-nonenal (HNE) forming a lipid adduct devoid of oxidoreductase activity, which then translocates from mitochondria into the nucleus triggering DNA damage and cell death. This Xenopus laevis (African clawed frog) protein is Ferroptosis suppressor protein 1 (aifm2).